The following is a 238-amino-acid chain: LexA repressor (238 aa).

A DNA-binding region (H-T-H motif) is located at residues 26–46 (FDEMKDALELRSKSGIHRLIS). Catalysis depends on for autocatalytic cleavage activity residues serine 159 and lysine 197.

Belongs to the peptidase S24 family. Homodimer.

It catalyses the reaction Hydrolysis of Ala-|-Gly bond in repressor LexA.. Its function is as follows. Represses a number of genes involved in the response to DNA damage (SOS response), including recA and lexA. In the presence of single-stranded DNA, RecA interacts with LexA causing an autocatalytic cleavage which disrupts the DNA-binding part of LexA, leading to derepression of the SOS regulon and eventually DNA repair. The polypeptide is LexA repressor (Gluconobacter oxydans (strain 621H) (Gluconobacter suboxydans)).